A 610-amino-acid chain; its full sequence is Protein mono-ADP-ribosyltransferase PARP6 (610 aa).

The PARP catalytic domain occupies Glu-374–Met-600. Position 580 is an ADP-ribosyl aspartic acid (Asp-580).

The protein belongs to the ARTD/PARP family. Auto-mono-ADP-ribosylated.

The enzyme catalyses L-aspartyl-[protein] + NAD(+) = 4-O-(ADP-D-ribosyl)-L-aspartyl-[protein] + nicotinamide. It catalyses the reaction L-cysteinyl-[protein] + NAD(+) = S-(ADP-D-ribosyl)-L-cysteinyl-[protein] + nicotinamide + H(+). Mono-ADP-ribosyltransferase that mediates mono-ADP-ribosylation of target proteins. The protein is Protein mono-ADP-ribosyltransferase PARP6 of Pongo abelii (Sumatran orangutan).